A 219-amino-acid polypeptide reads, in one-letter code: Octanoyltransferase (219 aa).

The BPL/LPL catalytic domain maps to 24 to 212 (KFRRECILFL…NLNSFLGPIS (189 aa)). Residues 69–76 (RGGDFTAH), 140–142 (SIG), and 153–155 (GVA) contribute to the substrate site. Cys171 acts as the Acyl-thioester intermediate in catalysis.

The protein belongs to the LipB family.

The protein localises to the cytoplasm. It catalyses the reaction octanoyl-[ACP] + L-lysyl-[protein] = N(6)-octanoyl-L-lysyl-[protein] + holo-[ACP] + H(+). It functions in the pathway protein modification; protein lipoylation via endogenous pathway; protein N(6)-(lipoyl)lysine from octanoyl-[acyl-carrier-protein]: step 1/2. Functionally, catalyzes the transfer of endogenously produced octanoic acid from octanoyl-acyl-carrier-protein onto the lipoyl domains of lipoate-dependent enzymes. Lipoyl-ACP can also act as a substrate although octanoyl-ACP is likely to be the physiological substrate. The polypeptide is Octanoyltransferase (Leptospira borgpetersenii serovar Hardjo-bovis (strain JB197)).